The following is a 766-amino-acid chain: LPS-assembly protein LptD (766 aa).

The N-terminal stretch at 1-18 (MQIRYFLALSLLPNIVLA) is a signal peptide.

It belongs to the LptD family. In terms of assembly, component of the lipopolysaccharide transport and assembly complex. Interacts with LptE and LptA.

Its subcellular location is the cell outer membrane. In terms of biological role, together with LptE, is involved in the assembly of lipopolysaccharide (LPS) at the surface of the outer membrane. The polypeptide is LPS-assembly protein LptD (Shewanella frigidimarina (strain NCIMB 400)).